A 232-amino-acid polypeptide reads, in one-letter code: Secreted LysM effector Mg3LysM (232 aa).

The signal sequence occupies residues 1–16; it reads MQNIFLAATLLGAAFA. The LysM 1 domain occupies 47 to 91; it reads TNYTVKAGDTLGAIAKQYNSGVCDIAKVNGIDNPDYIKPDQVLSI. N-linked (GlcNAc...) asparagine glycans are attached at residues asparagine 48, asparagine 100, asparagine 138, asparagine 195, asparagine 209, and asparagine 227. LysM domains follow at residues 120–165 and 177–221; these read STYT…VINT and GTYV…IIIL.

Belongs to the secreted LysM effector family.

Secreted effector that enables the plant pathogenic fungus to manipulate host defenses for successful infection. Binds chitin fragments and blocks the activation of chitin-induced plant defense responses. Protects fungal hyphae against hydrolytic plant enzymes. The protein is Secreted LysM effector Mg3LysM of Zymoseptoria tritici (strain CBS 115943 / IPO323) (Speckled leaf blotch fungus).